The primary structure comprises 258 residues: UPF0246 protein YaaA (258 aa).

It belongs to the UPF0246 family.

The sequence is that of UPF0246 protein YaaA from Shigella boydii serotype 18 (strain CDC 3083-94 / BS512).